Here is a 91-residue protein sequence, read N- to C-terminus: HssA/B-like protein 52 (91 aa).

2 disordered regions span residues 1–20 (MTLF…SKSS) and 72–91 (GGCG…CCGI).

The protein belongs to the hssA/B family.

The protein is HssA/B-like protein 52 (hssl52) of Dictyostelium discoideum (Social amoeba).